Here is a 255-residue protein sequence, read N- to C-terminus: Ribonuclease HII (255 aa).

Residues 72 to 255 (AIICGIDEVG…KSFEPIKSLL (184 aa)) form the RNase H type-2 domain. The a divalent metal cation site is built by Asp-78, Glu-79, and Asp-170.

This sequence belongs to the RNase HII family. Mn(2+) is required as a cofactor. The cofactor is Mg(2+).

Its subcellular location is the cytoplasm. The enzyme catalyses Endonucleolytic cleavage to 5'-phosphomonoester.. Its function is as follows. Endonuclease that specifically degrades the RNA of RNA-DNA hybrids. The polypeptide is Ribonuclease HII (Staphylococcus aureus (strain Mu3 / ATCC 700698)).